The primary structure comprises 757 residues: Double zinc ribbon and ankyrin repeat-containing protein 1 (757 aa).

2 DZANK-type zinc fingers span residues 230–290 (CAHC…VVCE) and 359–407 (CSRC…GSCG). 2 ANK repeats span residues 631-662 (ENRLLLEEVGSTGKGRLSVLEQLLDEGADPNC) and 666-695 (QGRPAVIVAVVNKHFEAIPVLAQRGADIDQ).

Interacts with NINL. Associates with DYNC1H1 and multiple dynein intermediate and light chains as well as actin-binding proteins. Expressed in retina.

It is found in the cell projection. Its subcellular location is the cilium. In terms of biological role, involved in vesicle transport in photoreceptor cells. This is Double zinc ribbon and ankyrin repeat-containing protein 1 from Rattus norvegicus (Rat).